The sequence spans 150 residues: Large ribosomal subunit protein bL17 (150 aa).

Positions 126–150 are disordered; the sequence is DRAKRREERLKAQREGRDHEEETDE.

Belongs to the bacterial ribosomal protein bL17 family. In terms of assembly, part of the 50S ribosomal subunit. Contacts protein L32.

The protein is Large ribosomal subunit protein bL17 of Solibacter usitatus (strain Ellin6076).